We begin with the raw amino-acid sequence, 121 residues long: Large ribosomal subunit protein uL14c (121 aa).

This sequence belongs to the universal ribosomal protein uL14 family. In terms of assembly, part of the 50S ribosomal subunit.

The protein localises to the plastid. It is found in the chloroplast. In terms of biological role, binds to 23S rRNA. This chain is Large ribosomal subunit protein uL14c, found in Trieres chinensis (Marine centric diatom).